Here is a 224-residue protein sequence, read N- to C-terminus: Large ribosomal subunit protein uL16z (224 aa).

It belongs to the universal ribosomal protein uL16 family. Component of the small ribosomal subunit. Mature ribosomes consist of a small (40S) and a large (60S) subunit. The 40S subunit contains about 33 different proteins and 1 molecule of RNA (18S). The 60S subunit contains about 49 different proteins and 3 molecules of RNA (25S, 5.8S and 5S).

This chain is Large ribosomal subunit protein uL16z (SC34), found in Oryza sativa subsp. indica (Rice).